We begin with the raw amino-acid sequence, 105 residues long: Heme oxygenase (mycobilin-producing) (105 aa).

The 90-residue stretch at 3–92 folds into the ABM domain; sequence VVKINAIEVP…VATGASLLEF (90 aa). Heme is bound by residues 22–26, histidine 75, and 83–86; these read RFAHR and VATG.

It belongs to the antibiotic biosynthesis monooxygenase family. In terms of assembly, homodimer.

It catalyses the reaction heme b + 3 AH2 + 3 O2 + 2 H(+) = mycobilin a + Fe(2+) + 3 A + 3 H2O. The enzyme catalyses heme b + 3 AH2 + 3 O2 + 2 H(+) = mycobilin b + Fe(2+) + 3 A + 3 H2O. Functionally, catalyzes the oxidative degradation of the heme macrocyclic porphyrin ring in the presence of a suitable electron donor such as ascorbate or NADPH--cytochrome P450 reductase, with subsequent release of free iron. The sequence is that of Heme oxygenase (mycobilin-producing) (mhuD) from Mycobacterium tuberculosis (strain CDC 1551 / Oshkosh).